We begin with the raw amino-acid sequence, 837 residues long: GRIP1-associated protein 1 (837 aa).

Ala-2 carries the N-acetylalanine modification. The stretch at 4–158 (ALSEEEFQRM…ALQERYGKEA (155 aa)) forms a coiled coil. Disordered stretches follow at residues 161 to 180 (PSAV…PISL), 555 to 577 (KGKE…ERDG), 647 to 666 (SEMN…VSSF), and 677 to 702 (SSAI…LSDE). A coiled-coil region spans residues 204-637 (EQLQGLESSK…LQEILTNSKS (434 aa)). A compositionally biased stretch (polar residues) spans 648-666 (EMNSPSRTQTGDSSSVSSF). Residues Ser-651, Ser-662, Ser-664, Ser-665, Ser-684, Ser-686, Ser-687, and Ser-688 each carry the phosphoserine modification. Residues 678–690 (SAIPARSLSSSPQ) show a composition bias toward low complexity. Coiled coils occupy residues 697–731 (AELS…LEVS) and 781–810 (DENL…KDME). Phosphoserine is present on Ser-826.

As to quaternary structure, interacts with GRIP1, GRIP2 and AMPA receptors. Interacts (via C-terminus) with MAPK8/JNK1 and with MAP3K1/MEKK1; the interaction promotes MAP3K1-mediated phosphorylation of MAPK8. Interacts (via N-terminus) with RAB4A (in GTP-bound form). Interacts (via C-terminus) with STX12. Proteolytically cleaved by caspase-3. A minor C-terminal proteolytic fragment of 30 kDa is produced. Proteolytic cleavage is required for JNK signaling activation. As to expression, expressed in the central nervous system; especially in neurons.

It is found in the early endosome membrane. The protein resides in the recycling endosome membrane. Its subcellular location is the cell projection. It localises to the axon. The protein localises to the dendrite. It is found in the synapse. In terms of biological role, regulates the endosomal recycling back to the neuronal plasma membrane, possibly by connecting early and late recycling endosomal domains and promoting segregation of recycling endosomes from early endosomal membranes. Involved in the localization of recycling endosomes to dendritic spines, thereby playing a role in the maintenance of dendritic spine morphology. Required for the activity-induced AMPA receptor recycling to dendrite membranes and for long-term potentiation and synaptic plasticity. Functionally, functions as a scaffold protein in neurons to facilitate MAP3K1/MEKK1-mediated activation of the JNK1 kinase by phosphorylation, possibly by bringing MAP3K1/MEKK1 and JNK1 in close proximity. This Rattus norvegicus (Rat) protein is GRIP1-associated protein 1 (Gripap1).